We begin with the raw amino-acid sequence, 287 residues long: Steroidogenic acute regulatory protein, mitochondrial (287 aa).

Residues 1–61 (MLPATFKLCA…RRSSLLSSRI (61 aa)) constitute a mitochondrion transit peptide. The region spanning 66-279 (GYNEAEVSYV…LRQRMADNSV (214 aa)) is the START domain.

May interact with TSPO.

It localises to the mitochondrion. It catalyses the reaction cholesterol(in) = cholesterol(out). Its pathway is steroid metabolism; cholesterol metabolism. Its function is as follows. Plays a key role in steroid hormone synthesis by enhancing the metabolism of cholesterol into pregnenolone. Mediates the transfer of cholesterol from the outer mitochondrial membrane to the inner mitochondrial membrane where it is cleaved to pregnenolone. In Salvelinus fontinalis (Brook trout), this protein is Steroidogenic acute regulatory protein, mitochondrial (star).